The primary structure comprises 389 residues: MVTVNEFRKAQRAEGPATVLAIGTATPPNCVDQSAYADYYFRITNSEDKPELKEKFRRMCEKSMINTRYMHLTEDLLKQNPSFCEYMASSLDARQDIVVNEVPKLGKEAALRAIKEWGQPKSKITHLIFCTTSGVDMPGADFRLTKLLGLRPSVKRFMMYQQGCFAGGTVLRLAKDLAENNKNARVLVVCSEITVITFRGPNDTHLDSLVGQALFGDGAGAVIVGSDPVIGIEKPLFEIVSAAQTILPDSDGAIDGHLREVGLTFHLLKDVPGLISKNIRKSLVEAFKPLGISDWNSIFWIAHPGGPAILDQVETELSLKPEKLKSTRQVLRDYGNMSSACVLFILDEMRKASAKDGHRTTGEGLDWGVLFGFGPGLTVETVVLHSVPP.

Cys-164 is a catalytic residue.

This sequence belongs to the thiolase-like superfamily. Chalcone/stilbene synthases family.

It catalyses the reaction (E)-4-coumaroyl-CoA + 3 malonyl-CoA + 3 H(+) = 2',4,4',6'-tetrahydroxychalcone + 3 CO2 + 4 CoA. Its pathway is secondary metabolite biosynthesis; flavonoid biosynthesis. Functionally, the primary product of this enzyme is 4,2',4',6'-tetrahydroxychalcone (also termed naringenin-chalcone or chalcone) which can under specific conditions spontaneously isomerize into naringenin. The chain is Chalcone synthase 1 (CHS1) from Daucus carota (Wild carrot).